We begin with the raw amino-acid sequence, 362 residues long: MAHAAAATGALAPLHPLLRCTSRHLCASASPRAGLCLHHHRRRRRSSRRTKLAVRAMAPTLSSSSTAAAAPPGLKEGIAGLYDESSGVWESIWGEHMHHGFYDAGEAASMSDHRRAQIRMIEESLAFAAVPDDAEKKPKSVVDVGCGIGGSSRYLANKYGAQCYGITLSPVQAERGNALAAEQGLSDKVSFQVGDALEQPFPDGQFDLVWSMESGEHMPDKRQFVSELARVAAPGARIIIVTWCHRNLEPSEESLKPDELNLLKRICDAYYLPDWCSPSDYVKIAESLSLEDIRTADWSENVAPFWPAVIKSALTWKGLTSLLRSGWKTIRGAMVMPLMIEGYKKGLIKFTIITCRKPETTQ.

The transit peptide at 1–55 (MAHAAAATGALAPLHPLLRCTSRHLCASASPRAGLCLHHHRRRRRSSRRTKLAVR) directs the protein to the chloroplast. The interval 141 to 150 (VVDVGCGIGG) is SAM motif I. The SAM motif II stretch occupies residues 204 to 212 (GQFDLVWSM). The SAM motif III stretch occupies residues 231–240 (VAAPGARIII).

Belongs to the class I-like SAM-binding methyltransferase superfamily. gTMT family.

Its subcellular location is the plastid. It localises to the chloroplast. It carries out the reaction gamma-tocopherol + S-adenosyl-L-methionine = (+)-alpha-tocopherol + S-adenosyl-L-homocysteine + H(+). The enzyme catalyses delta-tocotrienol + S-adenosyl-L-methionine = beta-tocotrienol + S-adenosyl-L-homocysteine + H(+). The catalysed reaction is gamma-tocotrienol + S-adenosyl-L-methionine = alpha-tocotrienol + S-adenosyl-L-homocysteine + H(+). It catalyses the reaction delta-tocopherol + S-adenosyl-L-methionine = beta-tocopherol + S-adenosyl-L-homocysteine + H(+). Its pathway is cofactor biosynthesis; tocopherol biosynthesis. Functionally, involved in the synthesis of tocopherol (vitamin E). Methylates gamma- and delta-tocopherol to form beta- and alpha-tocopherol, respectively. In Oryza sativa subsp. japonica (Rice), this protein is Probable tocopherol O-methyltransferase, chloroplastic (VTE4).